Consider the following 59-residue polypeptide: UPF0434 protein Ping_0902 (59 aa).

It belongs to the UPF0434 family.

The chain is UPF0434 protein Ping_0902 from Psychromonas ingrahamii (strain DSM 17664 / CCUG 51855 / 37).